A 934-amino-acid chain; its full sequence is Leucine--tRNA ligase 1 (934 aa).

Residues 41 to 51 (PYTNSPMHVGH) carry the 'HIGH' region motif. The 'KMSKS' region signature appears at 616–620 (KMSKS). An ATP-binding site is contributed by Lys-619.

It belongs to the class-I aminoacyl-tRNA synthetase family.

The protein resides in the cytoplasm. The catalysed reaction is tRNA(Leu) + L-leucine + ATP = L-leucyl-tRNA(Leu) + AMP + diphosphate. This is Leucine--tRNA ligase 1 from Saccharolobus solfataricus (strain ATCC 35092 / DSM 1617 / JCM 11322 / P2) (Sulfolobus solfataricus).